Reading from the N-terminus, the 301-residue chain is Methionyl-tRNA formyltransferase (301 aa).

109–112 (SLLP) contacts (6S)-5,6,7,8-tetrahydrofolate.

The protein belongs to the Fmt family.

The catalysed reaction is L-methionyl-tRNA(fMet) + (6R)-10-formyltetrahydrofolate = N-formyl-L-methionyl-tRNA(fMet) + (6S)-5,6,7,8-tetrahydrofolate + H(+). Attaches a formyl group to the free amino group of methionyl-tRNA(fMet). The formyl group appears to play a dual role in the initiator identity of N-formylmethionyl-tRNA by promoting its recognition by IF2 and preventing the misappropriation of this tRNA by the elongation apparatus. The polypeptide is Methionyl-tRNA formyltransferase (Novosphingobium aromaticivorans (strain ATCC 700278 / DSM 12444 / CCUG 56034 / CIP 105152 / NBRC 16084 / F199)).